Here is a 406-residue protein sequence, read N- to C-terminus: Large ribosomal subunit protein uL4z (406 aa).

The tract at residues 56-95 (PYAVSKKAGHQTSAESWGTGRAVSRIPRVPGGGTHRAGQA) is disordered.

The protein belongs to the universal ribosomal protein uL4 family.

In Arabidopsis thaliana (Mouse-ear cress), this protein is Large ribosomal subunit protein uL4z (RPL4A).